Here is a 380-residue protein sequence, read N- to C-terminus: MLPESDDFTNTAWHPQSWMHDLRSFIGEMAITQVCFVGSHDAASYGVSKDSPFGADAPGFLLGDSVFASLLRFLFRGICASWSRCQWMSVRAQLNHGVRYLDMRVATNPEDASRLYTLHHQISVPLADVLEDVKAFLNDPLSADEFIVLDFQHLYLTDDSDGKGKFFRELDRLSDRFIPVDVPLTTPLEFLWRASSRRRIFLVVGSGEDESPYPAARIRSKCMVSRWVNENSLRKLLEALDNLLLDDLKYPQTGVPSKLYVTQAVFTPRYSDIFLGIFPKISRRVVSSIYDVATRVNPSLLEWFYSLNARGLLDGMKVMIPSGINTHGNIFMLDCVELGSCQIMDGTTETNAVGMCVYLNILRASRLFEDSSAAPSLNEG.

Residues 31–205 (ITQVCFVGSH…SRRRIFLVVG (175 aa)) form the PI-PLC X-box domain.

Monomer.

Its subcellular location is the membrane. It carries out the reaction a 6-(alpha-D-glucosaminyl)-1-(1,2-diacyl-sn-glycero-3-phospho)-1D-myo-inositol = 6-(alpha-D-glucosaminyl)-1D-myo-inositol 1,2-cyclic phosphate + a 1,2-diacyl-sn-glycerol. Its function is as follows. By hydrolysis of the attached glycolipid, releases soluble variant surface glycoprotein containing phosphoinositol from the cell wall of T.brucei after cell lysis. It also cleaves similar membrane anchors on some mammalian proteins. VSG lipase may play a role in processes such as parasite differentiation or antigenic variation. This Trypanosoma cruzi protein is Variant-surface-glycoprotein phospholipase C.